The primary structure comprises 467 residues: Ribosomal RNA small subunit methyltransferase F (467 aa).

S-adenosyl-L-methionine is bound by residues 119-125 (ASAPGSK), E143, D170, and D188. The Nucleophile role is filled by C241.

Belongs to the class I-like SAM-binding methyltransferase superfamily. RsmB/NOP family.

The protein resides in the cytoplasm. The enzyme catalyses cytidine(1407) in 16S rRNA + S-adenosyl-L-methionine = 5-methylcytidine(1407) in 16S rRNA + S-adenosyl-L-homocysteine + H(+). In terms of biological role, specifically methylates the cytosine at position 1407 (m5C1407) of 16S rRNA. The sequence is that of Ribosomal RNA small subunit methyltransferase F from Shewanella amazonensis (strain ATCC BAA-1098 / SB2B).